Consider the following 106-residue polypeptide: Large ribosomal subunit protein uL24 (106 aa).

Belongs to the universal ribosomal protein uL24 family. Part of the 50S ribosomal subunit.

One of two assembly initiator proteins, it binds directly to the 5'-end of the 23S rRNA, where it nucleates assembly of the 50S subunit. Its function is as follows. One of the proteins that surrounds the polypeptide exit tunnel on the outside of the subunit. This chain is Large ribosomal subunit protein uL24, found in Clostridium acetobutylicum (strain ATCC 824 / DSM 792 / JCM 1419 / IAM 19013 / LMG 5710 / NBRC 13948 / NRRL B-527 / VKM B-1787 / 2291 / W).